Here is a 290-residue protein sequence, read N- to C-terminus: Lectin-related protein (290 aa).

Positions 1–36 (ANSNSRPHLLQTQKPFSVVLAISITFYLLLLNKVNS) are cleaved as a signal peptide. N-linked (GlcNAc...) asparagine glycosylation is found at N119, N147, and N152. Residues E161 and D163 each contribute to the Mn(2+) site. Ca(2+) contacts are provided by D163, N167, and D170. Mn(2+) contacts are provided by D170 and H175.

This sequence belongs to the leguminous lectin family. In terms of assembly, homotetramer.

Its function is as follows. Does not have any carbohydrate binding or agglutination activity. The sequence is that of Lectin-related protein from Cladrastis kentukea (Yellow wood).